Here is a 439-residue protein sequence, read N- to C-terminus: Homogentisate 1,2-dioxygenase (439 aa).

Positions 335, 341, and 371 each coordinate Fe cation.

It belongs to the homogentisate dioxygenase family. The cofactor is Fe cation.

It catalyses the reaction homogentisate + O2 = 4-maleylacetoacetate + H(+). It participates in amino-acid degradation; L-phenylalanine degradation; acetoacetate and fumarate from L-phenylalanine: step 4/6. The protein is Homogentisate 1,2-dioxygenase of Drosophila melanogaster (Fruit fly).